A 278-amino-acid polypeptide reads, in one-letter code: Undecaprenyl-diphosphatase 2 (278 aa).

The next 7 membrane-spanning stretches (helical) occupy residues 43–63 (GAAF…VYFW), 88–108 (ARLG…GLFF), 119–139 (LYIT…ADRI), 149–169 (LIWR…IPGV), 194–214 (FLLA…KSIG), 226–246 (LATL…LKLV), and 254–274 (FVWY…TGVI).

The protein belongs to the UppP family.

The protein localises to the cell inner membrane. It carries out the reaction di-trans,octa-cis-undecaprenyl diphosphate + H2O = di-trans,octa-cis-undecaprenyl phosphate + phosphate + H(+). In terms of biological role, catalyzes the dephosphorylation of undecaprenyl diphosphate (UPP). Confers resistance to bacitracin. This is Undecaprenyl-diphosphatase 2 from Agrobacterium fabrum (strain C58 / ATCC 33970) (Agrobacterium tumefaciens (strain C58)).